Here is a 122-residue protein sequence, read N- to C-terminus: Large ribosomal subunit protein uL14 (122 aa).

It belongs to the universal ribosomal protein uL14 family. Part of the 50S ribosomal subunit. Forms a cluster with proteins L3 and L19. In the 70S ribosome, L14 and L19 interact and together make contacts with the 16S rRNA in bridges B5 and B8.

Binds to 23S rRNA. Forms part of two intersubunit bridges in the 70S ribosome. The protein is Large ribosomal subunit protein uL14 of Carsonella ruddii (strain PV).